A 748-amino-acid chain; its full sequence is SNF-related serine/threonine-protein kinase (748 aa).

Residues 16–269 enclose the Protein kinase domain; the sequence is YDLDKTLGRG…LEEIESHPWL (254 aa). ATP contacts are provided by residues 22-30 and lysine 45; that span reads LGRGHFAVV. Residue aspartate 139 is the Proton acceptor of the active site. Serine 162 carries the phosphoserine modification. Threonine 173 bears the Phosphothreonine; by LKB1 mark. In terms of domain architecture, UBA spans 291–334; the sequence is SEEEHNSIIQRMVLGDIADRDAIVEALETNRYNHITATYFLLAE. 5 positions are modified to phosphoserine: serine 362, serine 390, serine 482, serine 495, and serine 518. Residues 383–415 are disordered; the sequence is SHATVPQSPARAGDNVLNGHRSKGLCDPAKKDE. A compositionally biased stretch (acidic residues) spans 491–503; sequence EEGESDDEFDMDE. A disordered region spans residues 491–640; the sequence is EEGESDDEFD…SPSPASASAA (150 aa). Residues 522–532 show a composition bias toward basic residues; that stretch reads VHKRYHRRKSQ. Positions 533 to 542 are enriched in low complexity; that stretch reads GRGSSCSSSE. Arginine 534 is subject to Omega-N-methylarginine. Over residues 549–558 the composition is skewed to basic and acidic residues; sequence ESRRRLDKDS. 2 stretches are compositionally biased toward gly residues: residues 575–592 and 600–614; these read GSEGDGGGQSKPSSGGGV and QGTGGGSQGGSGGTP. Phosphoserine is present on serine 606. Over residues 629–640 the composition is skewed to low complexity; the sequence is SSSPSPASASAA.

It belongs to the protein kinase superfamily. CAMK Ser/Thr protein kinase family. The cofactor is Mg(2+). In terms of processing, autophosphorylated. Phosphorylation on Thr-173 by STK11/LKB1 in complex with STE20-related adapter-alpha (STRADA) pseudo kinase and CAB39. In terms of tissue distribution, ubiquitously expressed in all tissues examined.

It localises to the nucleus. It carries out the reaction L-seryl-[protein] + ATP = O-phospho-L-seryl-[protein] + ADP + H(+). The catalysed reaction is L-threonyl-[protein] + ATP = O-phospho-L-threonyl-[protein] + ADP + H(+). With respect to regulation, activated by phosphorylation on Thr-173. Functionally, may play a role in hematopoietic cell proliferation or differentiation. Potential mediator of neuronal apoptosis. In Mus musculus (Mouse), this protein is SNF-related serine/threonine-protein kinase.